A 329-amino-acid chain; its full sequence is NADH-quinone oxidoreductase subunit H (329 aa).

The next 9 membrane-spanning stretches (helical) occupy residues 9–29, 42–62, 75–95, 117–137, 154–174, 188–208, 238–258, 269–291, and 309–329; these read LIKI…ATYI, GPCY…IKLF, FIFT…MAPI, IGFL…ILAG, IQLL…LMVV, GGFL…FLIA, LKWG…SFVI, WGFI…LSMW, and WKIM…IILI.

This sequence belongs to the complex I subunit 1 family. As to quaternary structure, NDH-1 is composed of 14 different subunits. Subunits NuoA, H, J, K, L, M, N constitute the membrane sector of the complex.

The protein resides in the cell inner membrane. It catalyses the reaction a quinone + NADH + 5 H(+)(in) = a quinol + NAD(+) + 4 H(+)(out). Its function is as follows. NDH-1 shuttles electrons from NADH, via FMN and iron-sulfur (Fe-S) centers, to quinones in the respiratory chain. The immediate electron acceptor for the enzyme in this species is believed to be ubiquinone. Couples the redox reaction to proton translocation (for every two electrons transferred, four hydrogen ions are translocated across the cytoplasmic membrane), and thus conserves the redox energy in a proton gradient. This subunit may bind ubiquinone. The protein is NADH-quinone oxidoreductase subunit H of Helicobacter pylori (strain ATCC 700392 / 26695) (Campylobacter pylori).